The primary structure comprises 124 residues: MNNLLLVALGGSIGAVFRYLISIFMIQVFGSSFPFGTLLVNVLGSFLMGVIYALGQMSHISPELKALIGVGLLGALTTFSTFSNETLLLMQEGDWLKAALNVVLNLSLCLFMVYLGQQLVFSRI.

Helical transmembrane passes span 4–24, 35–55, 60–80, and 102–122; these read LLLV…ISIF, FGTL…YALG, ISPE…TTFS, and VVLN…LVFS. Positions 74 and 77 each coordinate Na(+).

Belongs to the fluoride channel Fluc/FEX (TC 1.A.43) family.

It is found in the cell inner membrane. The catalysed reaction is fluoride(in) = fluoride(out). Na(+) is not transported, but it plays an essential structural role and its presence is essential for fluoride channel function. Its function is as follows. Fluoride-specific ion channel. Important for reducing fluoride concentration in the cell, thus reducing its toxicity. This is Fluoride-specific ion channel FluC from Shewanella sp. (strain ANA-3).